We begin with the raw amino-acid sequence, 774 residues long: Polyribonucleotide nucleotidyltransferase (774 aa).

Mg(2+)-binding residues include Asp485 and Asp491. The region spanning 552-611 is the KH domain; sequence PRIETMSVPKDKIRDIIGTGGKIIREIVATTGAKVDIDDDGTVKISSSDTAQIEAARNWI. In terms of domain architecture, S1 motif spans 621–689; it reads GKIYTGKVVN…NRGKVRLSMR (69 aa). The segment at 689–774 is disordered; sequence RVVDQETGEE…APAFLTRDDD (86 aa). Positions 700–755 are enriched in basic and acidic residues; sequence PDTRPPREERPRGDRGDRGDRGPRRDGDRRREGGDRGPRRDRGDRGDRPRRERSEG.

The protein belongs to the polyribonucleotide nucleotidyltransferase family. Requires Mg(2+) as cofactor.

The protein resides in the cytoplasm. It catalyses the reaction RNA(n+1) + phosphate = RNA(n) + a ribonucleoside 5'-diphosphate. Involved in mRNA degradation. Catalyzes the phosphorolysis of single-stranded polyribonucleotides processively in the 3'- to 5'-direction. This chain is Polyribonucleotide nucleotidyltransferase, found in Rhizorhabdus wittichii (strain DSM 6014 / CCUG 31198 / JCM 15750 / NBRC 105917 / EY 4224 / RW1) (Sphingomonas wittichii).